Reading from the N-terminus, the 846-residue chain is Structure-specific endonuclease subunit SLX4 (846 aa).

Disordered stretches follow at residues 1–20, 84–111, 123–164, 283–322, 480–513, 624–690, and 723–751; these read MTDHGPDALDAFSPPRVGSA, KAGAENLPVHRTKRRKLGNQRDNTAESM, QPAE…VKKA, RTSKSLDSESLDTGTSSTSEGNGKRKQTKKAKRSAKSKIT, DPTPKITPKPGDERQSNLSNKNTERNIPEESSLL, PPNA…MGSQ, and TLASRSASSHITPQISSAPSQTVPIQTRA. The segment covering 141 to 153 has biased composition (basic and acidic residues); it reads KPSEKGQKSEKTA. The segment covering 293-303 has biased composition (polar residues); sequence LDTGTSSTSEG. Basic residues predominate over residues 306–318; the sequence is KRKQTKKAKRSAK. 2 stretches are compositionally biased toward polar residues: residues 657-680 and 725-751; these read KEITNPARSSWSTAKNLKSSSKPT and ASRSASSHITPQISSAPSQTVPIQTRA.

The protein belongs to the SLX4 family. Forms a heterodimer with SLX1. Post-translationally, phosphorylated in response to DNA damage.

It is found in the nucleus. In terms of biological role, regulatory subunit of the SLX1-SLX4 structure-specific endonuclease that resolves DNA secondary structures generated during DNA repair and recombination. Has endonuclease activity towards branched DNA substrates, introducing single-strand cuts in duplex DNA close to junctions with ss-DNA. This is Structure-specific endonuclease subunit SLX4 from Arthroderma otae (strain ATCC MYA-4605 / CBS 113480) (Microsporum canis).